The following is a 520-amino-acid chain: NAD(P)H-quinone oxidoreductase subunit 2 (520 aa).

The next 14 helical transmembrane spans lie at 15–35 (ILPEGIVIVTLMGVLIVDLIL), 42–62 (WIGYLAIAGLLAAIVALYFQW), 79–99 (LSIIFRGIIALSAVVTILMSI), 106–126 (GTALAEFIAILLTATLGGMFV), 132–152 (LVMIFISLETLSISSYLLTGY), 167–187 (LLIGASSTAVFLYGVSLLYGL), 210–230 (LGAVIALVFVIAGIGFKISAA), 244–264 (PTPVIAFLSVGSKAAGFALAI), 280–300 (FVFTALAVLSMILGNVVALAQ), 306–326 (MLAYSSIAQAGFVMIGLIAGT), 334–354 (IFYLLVYLFMNLCGFTCIILF), 378–398 (LGLSISLLSLGGIPPLAGFFG), 400–420 (IYLFWAGWQAGLYWLVLLGLV), and 466–486 (VGLVLTLIATSVAGILSNPLF).

Belongs to the complex I subunit 2 family. In terms of assembly, NDH-1 can be composed of about 15 different subunits; different subcomplexes with different compositions have been identified which probably have different functions.

The protein localises to the cellular thylakoid membrane. It carries out the reaction a plastoquinone + NADH + (n+1) H(+)(in) = a plastoquinol + NAD(+) + n H(+)(out). It catalyses the reaction a plastoquinone + NADPH + (n+1) H(+)(in) = a plastoquinol + NADP(+) + n H(+)(out). Functionally, NDH-1 shuttles electrons from an unknown electron donor, via FMN and iron-sulfur (Fe-S) centers, to quinones in the respiratory and/or the photosynthetic chain. The immediate electron acceptor for the enzyme in this species is believed to be plastoquinone. Couples the redox reaction to proton translocation, and thus conserves the redox energy in a proton gradient. Cyanobacterial NDH-1 also plays a role in inorganic carbon-concentration. This is NAD(P)H-quinone oxidoreductase subunit 2 from Nostoc sp. (strain PCC 7120 / SAG 25.82 / UTEX 2576).